We begin with the raw amino-acid sequence, 1082 residues long: RE1-silencing transcription factor (1082 aa).

The tract at residues Asp-32–Gln-117 is interaction with SIN3A. Residues Ala-43–Glu-57 are interaction with SIN3B. The interaction with ZFP90 stretch occupies residues Pro-140–Lys-413. The C2H2-type 1 zinc-finger motif lies at Phe-154–His-176. The required for binding to the neuron-restrictive silencer element stretch occupies residues Ser-196–Ser-207. 7 C2H2-type zinc fingers span residues Ile-211–Arg-235, Tyr-243–His-265, Tyr-271–His-293, Tyr-299–His-321, Phe-327–His-350, Leu-356–His-378, and Phe-384–His-407. 2 disordered regions span residues Pro-408–Leu-809 and Ser-831–Leu-1027. Positions Glu-440–Pro-475 are enriched in basic and acidic residues. The span at Ser-477 to Thr-497 shows a compositional bias: low complexity. The span at Lys-581–Gly-597 shows a compositional bias: basic residues. The span at Val-630–Leu-640 shows a compositional bias: polar residues. Composition is skewed to pro residues over residues Tyr-684–Pro-713 and Lys-729–Met-751. Basic and acidic residues-rich tracts occupy residues Leu-798 to Leu-807 and Asn-854 to Glu-864. Residues Arg-900–Ala-909 are compositionally biased toward polar residues. Ser-950 bears the Phosphoserine mark. Positions Glu-985 to Tyr-1063 are interaction with RCOR1. The segment at Phe-1036–His-1058 adopts a C2H2-type 9 zinc-finger fold.

In terms of assembly, isoform 1 and isoform 2 form heterodimers. Isoform 2: Forms homodimers and homooligomers; binds to the neuron-restrictive silencer element (NRSE) as monomer. Interacts with SIN3A, SIN3B and RCOR1. Interacts with CDYL. Interacts with EHMT1 and EHMT2 only in the presence of CDYL. Part of a complex containing at least CDYL, REST, WIZ, SETB1, EHMT1 and EHMT2. Interacts (via zinc-finger DNA-binding domain) with ZFP90 (via N- and C-termini); the interaction inhibits REST repressor activity. Interacts (via C2H2-type zinc finger 5) with PRICKLE1. Interacts with FBXW11 and BTRC. Interacts with USP7. In terms of processing, O-glycosylated. Post-translationally, phosphorylated; phosphorylation is required for ubiquitination. Ubiquitinated; ubiquitination is mediated by BTRC and leads to proteasomal degradation in G2 phase. Ubiquitination increases during neuronal differentiation. Deubiquitinated by USP7; leading to its stabilization and promoting the maintenance of neural progenitor cells. As to expression, expressed in the hippocampus, including quiescent neuronal progenitor (QNP) cells, transient-amplifying progenitor (TAP) cells, neuroblasts and mature neurons (at protein level). Expressed in embryonic stem cells (at protein level). Expressed in many non-neuronal tissues including the heart and liver. Abundantly expressed in osteoblastic lineage cells. Expressed in the spleen, kidney, blood cells, cortex, neocortex and in the utricle, saccule and organ of Corti of the inner ear. Isoform 2: Expressed in the cortex, neocortex and in the utricle, saccule and organ of Corti of the inner ear.

The protein localises to the nucleus. Its subcellular location is the cytoplasm. Transcriptional repressor which binds neuron-restrictive silencer element (NRSE) and represses neuronal gene transcription in non-neuronal cells. Restricts the expression of neuronal genes by associating with two distinct corepressors, SIN3A and RCOR1, which in turn recruit histone deacetylase to the promoters of REST-regulated genes. Mediates repression by recruiting the BHC complex at RE1/NRSE sites which acts by deacetylating and demethylating specific sites on histones, thereby acting as a chromatin modifier. Transcriptional repression by REST-CDYL via the recruitment of histone methyltransferase EHMT2 may be important in transformation suppression. Represses the expression of SRRM4 in non-neural cells to prevent the activation of neural-specific splicing events and to prevent production of REST isoform 2. Repressor activity may be inhibited by forming heterodimers with isoform 2, thereby preventing binding to NRSE or binding to corepressors and leading to derepression of target genes. Also maintains repression of neuronal genes in neural stem cells, and allows transcription and differentiation into neurons by dissociation from RE1/NRSE sites of target genes. Thereby is involved in maintaining the quiescent state of adult neural stem cells and preventing premature differentiation into mature neurons. Plays a role in the developmental switch in synaptic NMDA receptor composition during postnatal development, by repressing GRIN2B expression and thereby altering NMDA receptor properties from containing primarily GRIN2B to primarily GRIN2A subunits. Acts as a regulator of osteoblast differentiation. Key repressor of gene expression in hypoxia; represses genes in hypoxia by direct binding to an RE1/NRSE site on their promoter regions. May also function in stress resistance in the brain during aging; possibly by regulating expression of genes involved in cell death and in the stress response. Repressor of gene expression in the hippocampus after ischemia by directly binding to RE1/NRSE sites and recruiting SIN3A and RCOR1 to promoters of target genes, thereby promoting changes in chromatin modifications and ischemia-induced cell death. After ischemia, might play a role in repression of miR-132 expression in hippocampal neurons, thereby leading to neuronal cell death. In terms of biological role, binds to the 3' region of the neuron-restrictive silencer element (NRSE), with lower affinity than isoform 1. Exhibits weaker repressor activity compared to isoform 1. May negatively regulate the repressor activity of isoform 1 by binding to isoform 1, thereby preventing its binding to NRSE and leading to derepression of target genes. However, in another study, does not appear to be implicated in repressor activity of a NRSE motif-containing reporter construct nor in inhibitory activity on the isoform 1 transcriptional repressor activity. Post-transcriptional inactivation of REST by SRRM4-dependent alternative splicing into isoform 2 is required in mechanosensory hair cells in the inner ear for derepression of neuronal genes, maintenance of hair cells and hearing. This Mus musculus (Mouse) protein is RE1-silencing transcription factor (Rest).